Reading from the N-terminus, the 391-residue chain is Superoxide dismutase [Fe] 1, chloroplastic (391 aa).

A chloroplast-targeting transit peptide spans 1–73; that stretch reads MAFATLVGVG…GESTNSRVLQ (73 aa). A compositionally biased stretch (acidic residues) spans 87-119; sequence VNDGIDDETASDAEMDEDAEANGDESSGTDEDA. Positions 87 to 120 are disordered; sequence VNDGIDDETASDAEMDEDAEANGDESSGTDEDAS. Fe cation-binding residues include histidine 148, histidine 202, aspartate 301, and histidine 305. The segment at 370 to 391 is disordered; the sequence is MPQQVNGDAREQTSGQEKSLGV. The segment covering 381 to 391 has biased composition (polar residues); sequence QTSGQEKSLGV.

This sequence belongs to the iron/manganese superoxide dismutase family. As to quaternary structure, homodimer. Fe cation serves as cofactor.

It is found in the plastid. Its subcellular location is the chloroplast. It catalyses the reaction 2 superoxide + 2 H(+) = H2O2 + O2. Its function is as follows. Destroys superoxide anion radicals which are normally produced within the cells and which are toxic to biological systems. This chain is Superoxide dismutase [Fe] 1, chloroplastic, found in Oryza sativa subsp. japonica (Rice).